Here is a 149-residue protein sequence, read N- to C-terminus: UPF0179 protein TON_1048 (149 aa).

The protein belongs to the UPF0179 family.

This Thermococcus onnurineus (strain NA1) protein is UPF0179 protein TON_1048.